The primary structure comprises 142 residues: Large ribosomal subunit protein uL11 (142 aa).

It belongs to the universal ribosomal protein uL11 family. As to quaternary structure, part of the ribosomal stalk of the 50S ribosomal subunit. Interacts with L10 and the large rRNA to form the base of the stalk. L10 forms an elongated spine to which L12 dimers bind in a sequential fashion forming a multimeric L10(L12)X complex. In terms of processing, one or more lysine residues are methylated.

Forms part of the ribosomal stalk which helps the ribosome interact with GTP-bound translation factors. This chain is Large ribosomal subunit protein uL11, found in Lachnoclostridium phytofermentans (strain ATCC 700394 / DSM 18823 / ISDg) (Clostridium phytofermentans).